We begin with the raw amino-acid sequence, 342 residues long: Heat-inducible transcription repressor HrcA (342 aa).

This sequence belongs to the HrcA family.

In terms of biological role, negative regulator of class I heat shock genes (grpE-dnaK-dnaJ and groELS operons). Prevents heat-shock induction of these operons. The protein is Heat-inducible transcription repressor HrcA of Methylibium petroleiphilum (strain ATCC BAA-1232 / LMG 22953 / PM1).